We begin with the raw amino-acid sequence, 467 residues long: Rhamnulokinase (467 aa).

Residue 11–15 coordinates ATP; that stretch reads ASSGR. Substrate is bound by residues alanine 78 and 235-237; that span reads HDT. The active-site Proton acceptor is aspartate 236. Threonine 257 provides a ligand contact to ATP. Residue asparagine 294 participates in substrate binding. Position 302 (glutamine 302) interacts with ATP. A disulfide bridge connects residues cysteine 351 and cysteine 368. An ATP-binding site is contributed by glycine 400.

The protein belongs to the rhamnulokinase family. Mg(2+) serves as cofactor.

It catalyses the reaction L-rhamnulose + ATP = L-rhamnulose 1-phosphate + ADP + H(+). Its pathway is carbohydrate degradation; L-rhamnose degradation; glycerone phosphate from L-rhamnose: step 2/3. In terms of biological role, involved in the catabolism of L-rhamnose (6-deoxy-L-mannose). Catalyzes the transfer of the gamma-phosphate group from ATP to the 1-hydroxyl group of L-rhamnulose to yield L-rhamnulose 1-phosphate. The sequence is that of Rhamnulokinase from Halalkalibacterium halodurans (strain ATCC BAA-125 / DSM 18197 / FERM 7344 / JCM 9153 / C-125) (Bacillus halodurans).